The chain runs to 347 residues: Quinolinate synthase (347 aa).

Iminosuccinate contacts are provided by histidine 47 and serine 68. Cysteine 113 contacts [4Fe-4S] cluster. Residues tyrosine 139 to asparagine 141 and serine 156 contribute to the iminosuccinate site. Cysteine 200 is a [4Fe-4S] cluster binding site. Iminosuccinate-binding positions include histidine 226–glutamate 228 and threonine 243. Cysteine 297 contacts [4Fe-4S] cluster.

This sequence belongs to the quinolinate synthase family. Type 1 subfamily. Requires [4Fe-4S] cluster as cofactor.

It is found in the cytoplasm. The enzyme catalyses iminosuccinate + dihydroxyacetone phosphate = quinolinate + phosphate + 2 H2O + H(+). Its pathway is cofactor biosynthesis; NAD(+) biosynthesis; quinolinate from iminoaspartate: step 1/1. Functionally, catalyzes the condensation of iminoaspartate with dihydroxyacetone phosphate to form quinolinate. This chain is Quinolinate synthase, found in Escherichia coli O45:K1 (strain S88 / ExPEC).